We begin with the raw amino-acid sequence, 298 residues long: MAHPEQQYLDLLAQTLERGDRRVDRTGVGTLSLFGAMLRFDLSDGQVPILTTKRVYWKTAVKEMLWFLTGGTNIRPLLQENVRIWSDWPLAAYRRESGEEISQAAFEQRILEDEAFAARWGELGPVYGRQWRRWLGPDGREHDQIAALIETLRTNPSSRRMLFHAWNVAEVGQMALPPCHMVYQYHVTSDGRLNALLYQRSVDLLLGAPFNFVGAAALQLMIAQQAGLVPGDLVWVGGDTHLYLNHLDQAREQTGRAPRDWPRMRLLRQADGIDDYRIEDFAVEGYDPHPAIAAEVAV.

Residues R25 and 159-160 contribute to the dUMP site; that span reads RR. The Nucleophile role is filled by C179. DUMP contacts are provided by residues 200–203, N211, and 241–243; these read RSVD and HLY. Residue D203 participates in (6R)-5,10-methylene-5,6,7,8-tetrahydrofolate binding. (6R)-5,10-methylene-5,6,7,8-tetrahydrofolate is bound at residue A297.

Belongs to the thymidylate synthase family. Bacterial-type ThyA subfamily. In terms of assembly, homodimer.

The protein localises to the cytoplasm. It carries out the reaction dUMP + (6R)-5,10-methylene-5,6,7,8-tetrahydrofolate = 7,8-dihydrofolate + dTMP. The protein operates within pyrimidine metabolism; dTTP biosynthesis. In terms of biological role, catalyzes the reductive methylation of 2'-deoxyuridine-5'-monophosphate (dUMP) to 2'-deoxythymidine-5'-monophosphate (dTMP) while utilizing 5,10-methylenetetrahydrofolate (mTHF) as the methyl donor and reductant in the reaction, yielding dihydrofolate (DHF) as a by-product. This enzymatic reaction provides an intracellular de novo source of dTMP, an essential precursor for DNA biosynthesis. The protein is Thymidylate synthase of Cereibacter sphaeroides (strain ATCC 17029 / ATH 2.4.9) (Rhodobacter sphaeroides).